Reading from the N-terminus, the 715-residue chain is Fatty acid oxidation complex subunit alpha (715 aa).

The segment at 1–190 (MIYQGKAITV…KVGAVDAVVA (190 aa)) is enoyl-CoA hydratase/isomerase. D297 contacts substrate. The tract at residues 312–715 (KDVKLAAVLG…MAKNGQKFFG (404 aa)) is 3-hydroxyacyl-CoA dehydrogenase. NAD(+) contacts are provided by residues M325, D344, 401–403 (VVE), K408, and S430. Residue H451 is the For 3-hydroxyacyl-CoA dehydrogenase activity of the active site. Residue N454 coordinates NAD(+). Substrate contacts are provided by N501 and Y660.

This sequence in the N-terminal section; belongs to the enoyl-CoA hydratase/isomerase family. The protein in the C-terminal section; belongs to the 3-hydroxyacyl-CoA dehydrogenase family. Heterotetramer of two alpha chains (FadB) and two beta chains (FadA).

It catalyses the reaction a (3S)-3-hydroxyacyl-CoA + NAD(+) = a 3-oxoacyl-CoA + NADH + H(+). The enzyme catalyses a (3S)-3-hydroxyacyl-CoA = a (2E)-enoyl-CoA + H2O. It carries out the reaction a 4-saturated-(3S)-3-hydroxyacyl-CoA = a (3E)-enoyl-CoA + H2O. The catalysed reaction is (3S)-3-hydroxybutanoyl-CoA = (3R)-3-hydroxybutanoyl-CoA. It catalyses the reaction a (3Z)-enoyl-CoA = a 4-saturated (2E)-enoyl-CoA. The enzyme catalyses a (3E)-enoyl-CoA = a 4-saturated (2E)-enoyl-CoA. It functions in the pathway lipid metabolism; fatty acid beta-oxidation. Involved in the aerobic and anaerobic degradation of long-chain fatty acids via beta-oxidation cycle. Catalyzes the formation of 3-oxoacyl-CoA from enoyl-CoA via L-3-hydroxyacyl-CoA. It can also use D-3-hydroxyacyl-CoA and cis-3-enoyl-CoA as substrate. The protein is Fatty acid oxidation complex subunit alpha of Pseudomonas aeruginosa (strain LESB58).